Consider the following 337-residue polypeptide: Adenosine deaminase-like protein (337 aa).

Residues His14 and His16 each coordinate Zn(2+). N(6)-methyl-AMP is bound by residues His16, Asn18, His66, 98–101 (TTPK), and Gly171. His198 is a Zn(2+) binding site. N(6)-methyl-AMP is bound by residues Glu201, Asp276, and Asp277. Glu201 (proton donor) is an active-site residue. Asp276 lines the Zn(2+) pocket.

It belongs to the metallo-dependent hydrolases superfamily. Adenosine and AMP deaminases family. As to quaternary structure, monomer. Zn(2+) serves as cofactor.

It catalyses the reaction N(6)-methyl-AMP + H2O + H(+) = IMP + methylamine. Functionally, catalyzes the hydrolysis of the free cytosolic methylated adenosine nucleotide N(6)-methyl-AMP (N6-mAMP) to produce inositol monophosphate (IMP) and methylamine. Is required for the catabolism of cytosolic N6-mAMP, which is derived from the degradation of mRNA containing N6-methylated adenine (m6A). The polypeptide is Adenosine deaminase-like protein (Ada) (Drosophila melanogaster (Fruit fly)).